A 313-amino-acid polypeptide reads, in one-letter code: Porphobilinogen deaminase (313 aa).

Cys-242 carries the S-(dipyrrolylmethanemethyl)cysteine modification.

The protein belongs to the HMBS family. Monomer. Dipyrromethane serves as cofactor.

It catalyses the reaction 4 porphobilinogen + H2O = hydroxymethylbilane + 4 NH4(+). It functions in the pathway porphyrin-containing compound metabolism; protoporphyrin-IX biosynthesis; coproporphyrinogen-III from 5-aminolevulinate: step 2/4. Its function is as follows. Tetrapolymerization of the monopyrrole PBG into the hydroxymethylbilane pre-uroporphyrinogen in several discrete steps. The sequence is that of Porphobilinogen deaminase from Pseudomonas putida (strain W619).